A 171-amino-acid polypeptide reads, in one-letter code: Adenine phosphoribosyltransferase (171 aa).

Belongs to the purine/pyrimidine phosphoribosyltransferase family. In terms of assembly, homodimer.

The protein localises to the cytoplasm. It catalyses the reaction AMP + diphosphate = 5-phospho-alpha-D-ribose 1-diphosphate + adenine. It participates in purine metabolism; AMP biosynthesis via salvage pathway; AMP from adenine: step 1/1. Functionally, catalyzes a salvage reaction resulting in the formation of AMP, that is energically less costly than de novo synthesis. The sequence is that of Adenine phosphoribosyltransferase from Trichlorobacter lovleyi (strain ATCC BAA-1151 / DSM 17278 / SZ) (Geobacter lovleyi).